Here is a 366-residue protein sequence, read N- to C-terminus: Subtilisin-like protease het-Q2 (366 aa).

One can recognise a Peptidase S8 domain in the interval Met1–Thr321. Catalysis depends on Asp35, which acts as the Charge relay system. Positions Asp79 to Ser98 are disordered. The segment covering Pro83–Pro96 has biased composition (pro residues). Catalysis depends on charge relay system residues His105 and Ser266. A helical membrane pass occupies residues Leu261–Val283.

It belongs to the peptidase S8 family.

The protein resides in the membrane. Its function is as follows. Serine protease involved in heterokaryon incompatibility, a process that ensures that during spontaneous vegetative cell fusion, only compatible cells from the same colony survive (non-self-recognition). In P.anserina, the het-q locus exists as 2 incompatible alleles, het-Q1 (AC B2AXJ5) and het-Q2 (this entry). Prevents cell fusion with strains containing the gasdermin-like protein het-Q1 by mediating proteolytic cleavage and maturation of het-Q1 during the allorecognition process, thereby triggering cell death. The sequence is that of Subtilisin-like protease het-Q2 from Podospora anserina (Pleurage anserina).